A 476-amino-acid polypeptide reads, in one-letter code: UDP-glucose 6-dehydrogenase (476 aa).

Residues 7 to 12, Asp-32, Arg-37, 85 to 89, 126 to 127, and Glu-161 each bind NAD(+); these read GAGYVG, VNTPT, and ST. Substrate contacts are provided by residues 157–161, 216–220, Arg-256, and 263–269; these read EFLAE, KLAAN, and QASVGFG. Cys-272 (nucleophile) is an active-site residue. 272–275 lines the NAD(+) pocket; that stretch reads CFQK. 334–335 provides a ligand contact to substrate; the sequence is FK. Residue Arg-342 coordinates NAD(+). Arg-439 contributes to the substrate binding site.

The protein belongs to the UDP-glucose/GDP-mannose dehydrogenase family.

It carries out the reaction UDP-alpha-D-glucose + 2 NAD(+) + H2O = UDP-alpha-D-glucuronate + 2 NADH + 3 H(+). It functions in the pathway nucleotide-sugar biosynthesis; UDP-alpha-D-glucuronate biosynthesis; UDP-alpha-D-glucuronate from UDP-alpha-D-glucose: step 1/1. Involved in the biosynthesis of glycosaminoglycans; hyaluronan, chondroitin sulfate and heparan sulfate. Required for wingless signaling in different tissues. The polypeptide is UDP-glucose 6-dehydrogenase (sgl) (Drosophila melanogaster (Fruit fly)).